Reading from the N-terminus, the 32-residue chain is Islet amyloid polypeptide (32 aa).

The protein belongs to the calcitonin family. Can form homodimers. Interacts with IDE and INS. Interaction with INS inhibits homodimerization and fibril formation.

Its subcellular location is the secreted. Its function is as follows. Amylin/IAPP is a glucoregulatory peptide hormone that plays an important role in the regulation of energy homeostasis. Selectively inhibits insulin-stimulated glucose utilization and glycogen deposition in muscle, while not affecting adipocyte glucose metabolism. IAPP function is mediated by the CALCR-RAMPs (AMYRs) receptor complexes. Amylin can also bind CALCR receptor in the absence of RAMPs, although it is more selective for AMYRs. This chain is Islet amyloid polypeptide (IAPP), found in Ovis aries (Sheep).